The chain runs to 404 residues: GTPase Obg (404 aa).

Residues 1–159 (MKFIDEARIE…RALRLELKVL (159 aa)) enclose the Obg domain. Positions 22–43 (SFRREKFIPRGGPDGGDGGRGG) are disordered. Over residues 33-43 (GPDGGDGGRGG) the composition is skewed to gly residues. Residues 160 to 334 (ADVGLLGMPN…LVFAIQDFLD (175 aa)) enclose the OBG-type G domain. GTP is bound by residues 166–173 (GMPNAGKS), 191–195 (FTTLA), 213–216 (DIPG), 284–287 (NKLD), and 315–317 (SAL). S173 and T193 together coordinate Mg(2+). Positions 373–404 (LLAEGETGTGDDGRDGNENDPADEQDTNRPNH) are disordered.

This sequence belongs to the TRAFAC class OBG-HflX-like GTPase superfamily. OBG GTPase family. Monomer. Requires Mg(2+) as cofactor.

It is found in the cytoplasm. An essential GTPase which binds GTP, GDP and possibly (p)ppGpp with moderate affinity, with high nucleotide exchange rates and a fairly low GTP hydrolysis rate. Plays a role in control of the cell cycle, stress response, ribosome biogenesis and in those bacteria that undergo differentiation, in morphogenesis control. The polypeptide is GTPase Obg (Aromatoleum aromaticum (strain DSM 19018 / LMG 30748 / EbN1) (Azoarcus sp. (strain EbN1))).